A 99-amino-acid polypeptide reads, in one-letter code: Large ribosomal subunit protein uL23 (99 aa).

The protein belongs to the universal ribosomal protein uL23 family. Part of the 50S ribosomal subunit. Contacts protein L29, and trigger factor when it is bound to the ribosome.

In terms of biological role, one of the early assembly proteins it binds 23S rRNA. One of the proteins that surrounds the polypeptide exit tunnel on the outside of the ribosome. Forms the main docking site for trigger factor binding to the ribosome. The polypeptide is Large ribosomal subunit protein uL23 (Alkalilimnicola ehrlichii (strain ATCC BAA-1101 / DSM 17681 / MLHE-1)).